We begin with the raw amino-acid sequence, 56 residues long: Small ribosomal subunit protein uS14 (56 aa).

4 residues coordinate Zn(2+): cysteine 21, cysteine 24, cysteine 39, and cysteine 42.

Belongs to the universal ribosomal protein uS14 family. Requires Zn(2+) as cofactor.

This chain is Small ribosomal subunit protein uS14 (rps29A), found in Guillardia theta (Cryptophyte).